The chain runs to 501 residues: Adenylosuccinate synthetase 2, chloroplastic (501 aa).

GTP is bound by residues 87–93 (GDEGKGK) and 115–117 (GHT). Aspartate 88 (proton acceptor) is an active-site residue. Mg(2+) contacts are provided by aspartate 88 and glycine 115. IMP contacts are provided by residues 88–91 (DEGK), 113–116 (NAGH), threonine 205, arginine 219, glutamine 300, threonine 315, and arginine 379. Histidine 116 functions as the Proton donor in the catalytic mechanism. Residue 375–381 (NITGRPR) participates in substrate binding. GTP is bound by residues arginine 381, 407-409 (KLD), and 490-492 (GIG).

This sequence belongs to the adenylosuccinate synthetase family. Homodimer. The cofactor is Mg(2+).

It is found in the plastid. The protein resides in the chloroplast. It catalyses the reaction IMP + L-aspartate + GTP = N(6)-(1,2-dicarboxyethyl)-AMP + GDP + phosphate + 2 H(+). The protein operates within purine metabolism; AMP biosynthesis via de novo pathway; AMP from IMP: step 1/2. Its function is as follows. Plays an important role in the de novo pathway and in the salvage pathway of purine nucleotide biosynthesis. Catalyzes the first committed step in the biosynthesis of AMP from IMP. This Capsicum frutescens (Cayenne pepper) protein is Adenylosuccinate synthetase 2, chloroplastic.